The chain runs to 768 residues: Phosphoribosylformylglycinamidine synthase subunit PurL (768 aa).

Residue H46 is part of the active site. Y49 and K88 together coordinate ATP. E90 is a binding site for Mg(2+). Residues 91-94 and R113 contribute to the substrate site; that span reads SHNH. H92 (proton acceptor) is an active-site residue. D114 is a binding site for Mg(2+). Q237 serves as a coordination point for substrate. D265 serves as a coordination point for Mg(2+). 309–311 is a substrate binding site; sequence ESQ. ATP-binding residues include D514 and G551. N552 is a Mg(2+) binding site. S554 contributes to the substrate binding site.

The protein belongs to the FGAMS family. In terms of assembly, monomer. Part of the FGAM synthase complex composed of 1 PurL, 1 PurQ and 2 PurS subunits.

It localises to the cytoplasm. It catalyses the reaction N(2)-formyl-N(1)-(5-phospho-beta-D-ribosyl)glycinamide + L-glutamine + ATP + H2O = 2-formamido-N(1)-(5-O-phospho-beta-D-ribosyl)acetamidine + L-glutamate + ADP + phosphate + H(+). It functions in the pathway purine metabolism; IMP biosynthesis via de novo pathway; 5-amino-1-(5-phospho-D-ribosyl)imidazole from N(2)-formyl-N(1)-(5-phospho-D-ribosyl)glycinamide: step 1/2. Functionally, part of the phosphoribosylformylglycinamidine synthase complex involved in the purines biosynthetic pathway. Catalyzes the ATP-dependent conversion of formylglycinamide ribonucleotide (FGAR) and glutamine to yield formylglycinamidine ribonucleotide (FGAM) and glutamate. The FGAM synthase complex is composed of three subunits. PurQ produces an ammonia molecule by converting glutamine to glutamate. PurL transfers the ammonia molecule to FGAR to form FGAM in an ATP-dependent manner. PurS interacts with PurQ and PurL and is thought to assist in the transfer of the ammonia molecule from PurQ to PurL. In Synechocystis sp. (strain ATCC 27184 / PCC 6803 / Kazusa), this protein is Phosphoribosylformylglycinamidine synthase subunit PurL.